The chain runs to 1079 residues: Adhesion G-protein coupled receptor F3 (1079 aa).

Residues Met1–Ala25 form the signal peptide. At Ser26–Gln775 the chain is on the extracellular side. Asn188, Asn264, Asn301, Asn382, Asn441, and Asn648 each carry an N-linked (GlcNAc...) asparagine glycan. A GAIN-B domain is found at His599–Pro765. Cystine bridges form between Cys715-Cys747 and Cys734-Cys749. The interval Cys715 to Pro765 is GPS. Residues Val776–Trp796 form a helical membrane-spanning segment. The Cytoplasmic segment spans residues Arg797–Ala811. A helical transmembrane segment spans residues Leu812–Leu832. The Extracellular portion of the chain corresponds to Ser833–Leu851. The chain crosses the membrane as a helical span at residues Tyr852 to Phe874. At His875–Arg881 the chain is on the cytoplasmic side. The chain crosses the membrane as a helical span at residues Val882–Leu902. The Extracellular segment spans residues Gly903–Thr928. Residues Phe929–Leu949 traverse the membrane as a helical segment. The Cytoplasmic segment spans residues Lys950–Lys973. Residues Ala974–Leu994 traverse the membrane as a helical segment. Residues Glu995 to His1002 lie on the Extracellular side of the membrane. Residues Tyr1003–Met1023 form a helical membrane-spanning segment. The Cytoplasmic segment spans residues Asp1024–Ser1079.

It belongs to the G-protein coupled receptor 2 family. Adhesion G-protein coupled receptor (ADGR) subfamily. Heterodimer of 2 chains generated by proteolytic processing; the large extracellular N-terminal fragment and the membrane-bound C-terminal fragment predominantly remain associated and non-covalently linked. Autoproteolytically processed at the GPS region of the GAIN-B domain; this cleavage modulates receptor activity.

The protein localises to the membrane. Functionally, orphan receptor. In Homo sapiens (Human), this protein is Adhesion G-protein coupled receptor F3 (ADGRF3).